Reading from the N-terminus, the 261-residue chain is HLA class II histocompatibility antigen, DM alpha chain (261 aa).

Residues 1–26 (MGHEQNQGAALLQMLPLLWLLPHSWA) form the signal peptide. An alpha-1 region spans residues 27–124 (VPEAPTPMWP…KLDGKIPVSR (98 aa)). Residues 27–233 (VPEAPTPMWP…PSDLLENVLC (207 aa)) are Lumenal-facing. N-linked (GlcNAc...) asparagine glycosylation occurs at Asn-41. 2 disulfides stabilise this stretch: Cys-50–Cys-105 and Cys-147–Cys-202. Residues 121–215 (PVSRGFPIAE…HEIDRYTAIA (95 aa)) enclose the Ig-like C1-type domain. An alpha-2 region spans residues 125–217 (GFPIAEVFTL…IDRYTAIAYW (93 aa)). The interval 218-233 (VPRNALPSDLLENVLC) is connecting peptide. The chain crosses the membrane as a helical span at residues 234-254 (GVAFGLGVLGIIVGIVLIIYF). Over 255–261 (RKPCSGD) the chain is Cytoplasmic.

It belongs to the MHC class II family. Heterodimer of an alpha chain (DMA) and a beta chain (DMB). Interacts with MHCII; this interaction mediates rapid selection of high-affinity peptides in a pH-dependent manner, with an optimum at pH 5.5.

It is found in the late endosome membrane. The protein resides in the lysosome membrane. Its function is as follows. Plays a critical role in catalyzing the release of class II-associated invariant chain peptide (CLIP) from newly synthesized MHC class II molecules and freeing the peptide binding site for acquisition of antigenic peptides. In B-cells, the interaction between HLA-DM and MHC class II molecules is regulated by HLA-DO. The polypeptide is HLA class II histocompatibility antigen, DM alpha chain (HLA-DMA) (Homo sapiens (Human)).